The primary structure comprises 90 residues: Small ribosomal subunit protein uS17 (90 aa).

Belongs to the universal ribosomal protein uS17 family. Part of the 30S ribosomal subunit.

One of the primary rRNA binding proteins, it binds specifically to the 5'-end of 16S ribosomal RNA. The chain is Small ribosomal subunit protein uS17 from Burkholderia ambifaria (strain ATCC BAA-244 / DSM 16087 / CCUG 44356 / LMG 19182 / AMMD) (Burkholderia cepacia (strain AMMD)).